Consider the following 91-residue polypeptide: Virion membrane protein A14 homolog (91 aa).

Topologically, residues methionine 1–serine 12 are intravirion. Residues tyrosine 13 to leucine 33 traverse the membrane as a helical segment. Residues serine 34–serine 46 are Virion surface-facing. Residues isoleucine 47 to glycine 67 form a helical membrane-spanning segment. The Intravirion segment spans residues tyrosine 68 to glutamine 91.

Belongs to the chordopoxvirinae A14 family. In terms of assembly, homodimer; disulfide-linked. Interacts with A17. Phosphorylated by viral F10 kinase, phosphorylation state is regulated by H1 phosphatase.

It is found in the virion membrane. In terms of biological role, envelope protein which is a major component of the mature virion (MV) membrane. Essential for membrane biogenesis. Is required, together with A17, to form bona fide crescents, which can progress to form the immature virion (IV) membrane. A14 and A17 form a lattice that is stabilized by disulfide bonds and serves as an anchor within the viral membrane to which several other proteins important in virion structure and morphogenesis attach. This Fowlpox virus (strain NVSL) (FPV) protein is Virion membrane protein A14 homolog.